The following is a 160-amino-acid chain: Transcription antitermination protein NusB (160 aa).

This sequence belongs to the NusB family.

Involved in transcription antitermination. Required for transcription of ribosomal RNA (rRNA) genes. Binds specifically to the boxA antiterminator sequence of the ribosomal RNA (rrn) operons. This is Transcription antitermination protein NusB from Rhizobium etli (strain ATCC 51251 / DSM 11541 / JCM 21823 / NBRC 15573 / CFN 42).